Consider the following 341-residue polypeptide: tRNA N6-adenosine threonylcarbamoyltransferase (341 aa).

Fe cation is bound by residues His-111 and His-115. Substrate contacts are provided by residues 134-138 (LVSGG), Asp-167, Gly-180, and Asn-276. Asp-304 serves as a coordination point for Fe cation.

Belongs to the KAE1 / TsaD family. Fe(2+) is required as a cofactor.

The protein localises to the cytoplasm. The catalysed reaction is L-threonylcarbamoyladenylate + adenosine(37) in tRNA = N(6)-L-threonylcarbamoyladenosine(37) in tRNA + AMP + H(+). In terms of biological role, required for the formation of a threonylcarbamoyl group on adenosine at position 37 (t(6)A37) in tRNAs that read codons beginning with adenine. Is involved in the transfer of the threonylcarbamoyl moiety of threonylcarbamoyl-AMP (TC-AMP) to the N6 group of A37, together with TsaE and TsaB. TsaD likely plays a direct catalytic role in this reaction. The sequence is that of tRNA N6-adenosine threonylcarbamoyltransferase from Azotobacter vinelandii (strain DJ / ATCC BAA-1303).